Reading from the N-terminus, the 330-residue chain is MNQNLIRLGYACLNSDLRNYDIFTSRKPILKTVKSQGFDYVKETIIRNLRDLFTIIIYNESHGIRFFRISSSIFPHLGNPLLPDSDYDLSFAKNLIKEIGSYAKINGHRLTMHPGQFVQLGSNNEEVVRRSFVELQNHATLLEMLGYSSLDSSVLIVHGGGTFGDKETTLERWKSNFRKLPENIRQLICLENDENSYGILDLLPVCEELNVPFCLDIFHNRVSKNRIPLTKKLMKRIINTWKRRNMTPKMHFSNQEPGLRRGAHSKTINELPEYLFRIPDMFQTSLDIILEVKDKEKSVLKMYFKYFDIETNIDGRNNFILKKDYSLKKN.

Belongs to the uve1/UvsE family.

Its subcellular location is the virion. Its function is as follows. Endonuclease for the repair of UV-irradiated DNA. This chain is Putative UV-damage endonuclease, found in Acanthamoeba polyphaga mimivirus (APMV).